Consider the following 750-residue polypeptide: Ribosomal RNA large subunit methyltransferase K/L (750 aa).

One can recognise a THUMP domain in the interval 46–157 (TAYRLCLWSR…RGEAILSLDL (112 aa)).

The protein belongs to the methyltransferase superfamily. RlmKL family.

Its subcellular location is the cytoplasm. It carries out the reaction guanosine(2445) in 23S rRNA + S-adenosyl-L-methionine = N(2)-methylguanosine(2445) in 23S rRNA + S-adenosyl-L-homocysteine + H(+). It catalyses the reaction guanosine(2069) in 23S rRNA + S-adenosyl-L-methionine = N(2)-methylguanosine(2069) in 23S rRNA + S-adenosyl-L-homocysteine + H(+). Functionally, specifically methylates the guanine in position 2445 (m2G2445) and the guanine in position 2069 (m7G2069) of 23S rRNA. The protein is Ribosomal RNA large subunit methyltransferase K/L of Pseudomonas savastanoi pv. phaseolicola (strain 1448A / Race 6) (Pseudomonas syringae pv. phaseolicola (strain 1448A / Race 6)).